A 211-amino-acid polypeptide reads, in one-letter code: Small ribosomal subunit protein uS3 (211 aa).

The 69-residue stretch at 38-106 (LRKFIKKAFY…NIELNIIEVK (69 aa)) folds into the KH type-2 domain.

It belongs to the universal ribosomal protein uS3 family. In terms of assembly, part of the 30S ribosomal subunit. Forms a tight complex with proteins S10 and S14.

Functionally, binds the lower part of the 30S subunit head. Binds mRNA in the 70S ribosome, positioning it for translation. This chain is Small ribosomal subunit protein uS3, found in Ehrlichia chaffeensis (strain ATCC CRL-10679 / Arkansas).